The primary structure comprises 409 residues: Peptidase T (409 aa).

H80 serves as a coordination point for Zn(2+). The active site involves D82. Zn(2+) is bound at residue D143. The active-site Proton acceptor is the E177. Positions 178, 200, and 382 each coordinate Zn(2+).

This sequence belongs to the peptidase M20B family. Requires Zn(2+) as cofactor.

It localises to the cytoplasm. The catalysed reaction is Release of the N-terminal residue from a tripeptide.. Functionally, cleaves the N-terminal amino acid of tripeptides. The chain is Peptidase T from Enterococcus faecalis (strain ATCC 700802 / V583).